A 399-amino-acid polypeptide reads, in one-letter code: Sperm equatorial segment protein 1 (399 aa).

The signal sequence occupies residues 1–18 (MKLVVLVALWLWPSSLLA). Residue asparagine 128 is glycosylated (N-linked (GlcNAc...) asparagine). Residues 136–145 (EEPFIEKEPE) are compositionally biased toward basic and acidic residues. The disordered stretch occupies residues 136 to 250 (EEPFIEKEPE…PSAEDLPGRH (115 aa)). Positions 157–167 (PEPELEPEPEP) are enriched in acidic residues. A compositionally biased stretch (polar residues) spans 182–206 (VTSTTPNKELTGTSRISSMATQPAN). Residues 207 to 225 (TQATRITVTVKTTSTMDVS) are compositionally biased toward low complexity.

Belongs to the SPESP1 family. In terms of processing, glycosylated. In testis there are two predominant forms of 77- and 67-kDa and a form of 47-kDa, whereas in epididymal sperm from caput, corpus, and cauda there are two forms of 47- and 43-kDa. Testis forms contain complex carbohydrate residues. Epididymal sperm forms are N-glycosylated. Then undergoes significant glycosylation in the testis and that the majority of these glycoconjugates are removed by the time sperm reach the caput epididymis. As to expression, testis specific.

The protein localises to the cytoplasmic vesicle. The protein resides in the secretory vesicle. It is found in the acrosome. Its function is as follows. Involved in fertilization ability of sperm. The protein is Sperm equatorial segment protein 1 of Mus musculus (Mouse).